The sequence spans 491 residues: Probable cytosol aminopeptidase (491 aa).

Residues lysine 260 and aspartate 265 each contribute to the Mn(2+) site. Lysine 272 is a catalytic residue. Mn(2+) is bound by residues aspartate 284, aspartate 343, and glutamate 345. Arginine 347 is a catalytic residue.

The protein belongs to the peptidase M17 family. It depends on Mn(2+) as a cofactor.

Its subcellular location is the cytoplasm. It catalyses the reaction Release of an N-terminal amino acid, Xaa-|-Yaa-, in which Xaa is preferably Leu, but may be other amino acids including Pro although not Arg or Lys, and Yaa may be Pro. Amino acid amides and methyl esters are also readily hydrolyzed, but rates on arylamides are exceedingly low.. The enzyme catalyses Release of an N-terminal amino acid, preferentially leucine, but not glutamic or aspartic acids.. Presumably involved in the processing and regular turnover of intracellular proteins. Catalyzes the removal of unsubstituted N-terminal amino acids from various peptides. The sequence is that of Probable cytosol aminopeptidase from Rippkaea orientalis (strain PCC 8801 / RF-1) (Cyanothece sp. (strain PCC 8801)).